Reading from the N-terminus, the 492-residue chain is UDP-N-acetylmuramoyl-L-alanyl-D-glutamate--2,6-diaminopimelate ligase (492 aa).

Residue Ser21 coordinates UDP-N-acetyl-alpha-D-muramoyl-L-alanyl-D-glutamate. 98 to 104 is a binding site for ATP; that stretch reads GTNGKSS. UDP-N-acetyl-alpha-D-muramoyl-L-alanyl-D-glutamate-binding positions include 144–145, Ser171, Gln177, and Arg179; that span reads TT. At Lys211 the chain carries N6-carboxylysine. Meso-2,6-diaminopimelate-binding positions include Arg372, 396 to 399, Gly446, and Glu450; that span reads DNPR. The Meso-diaminopimelate recognition motif signature appears at 396 to 399; the sequence is DNPR.

This sequence belongs to the MurCDEF family. MurE subfamily. Mg(2+) serves as cofactor. In terms of processing, carboxylation is probably crucial for Mg(2+) binding and, consequently, for the gamma-phosphate positioning of ATP.

It is found in the cytoplasm. The catalysed reaction is UDP-N-acetyl-alpha-D-muramoyl-L-alanyl-D-glutamate + meso-2,6-diaminopimelate + ATP = UDP-N-acetyl-alpha-D-muramoyl-L-alanyl-gamma-D-glutamyl-meso-2,6-diaminopimelate + ADP + phosphate + H(+). It participates in cell wall biogenesis; peptidoglycan biosynthesis. In terms of biological role, catalyzes the addition of meso-diaminopimelic acid to the nucleotide precursor UDP-N-acetylmuramoyl-L-alanyl-D-glutamate (UMAG) in the biosynthesis of bacterial cell-wall peptidoglycan. This is UDP-N-acetylmuramoyl-L-alanyl-D-glutamate--2,6-diaminopimelate ligase from Rickettsia typhi (strain ATCC VR-144 / Wilmington).